We begin with the raw amino-acid sequence, 57 residues long: Large ribosomal subunit protein bL32 (57 aa).

Belongs to the bacterial ribosomal protein bL32 family.

In Lysinibacillus sphaericus (strain C3-41), this protein is Large ribosomal subunit protein bL32.